The following is a 386-amino-acid chain: 5-hydroxytryptamine receptor 1B (386 aa).

Residues 1-42 (MEEQGIQCAPPPPAASQTGVPLVNLSHNCSAESHIYQDSIAL) lie on the Extracellular side of the membrane. Asparagine 24 and asparagine 28 each carry an N-linked (GlcNAc...) asparagine glycan. The chain crosses the membrane as a helical span at residues 43–68 (PWKVLLVALLALITLATTLSNAFVIA). At 69–82 (TVYRTRKLHTPANY) the chain is on the cytoplasmic side. Residues 83–107 (LIASLAVTDLLVSILVMPVSTMYTV) traverse the membrane as a helical segment. Residues 108–115 (TGRWTLGQ) are Extracellular-facing. The helical transmembrane segment at 116 to 141 (VVCDFWLSSDITCCTASIMHLCVIAL) threads the bilayer. Cysteines 118 and 195 form a disulfide. Ergotamine is bound by residues aspartate 125 and threonine 130. A DRY motif; important for ligand-induced conformation changes and signaling motif is present at residues 142–144 (DRY). Topologically, residues 142-161 (DRYWAITDAVEYAAKRTPKR) are cytoplasmic. The chain crosses the membrane as a helical span at residues 162–180 (AAIMIALVWVFSISISLPP). Topologically, residues 181 to 201 (FFWRQAKAEEEVLTCLVNTDH) are extracellular. Valine 197 is an ergotamine binding site. A helical membrane pass occupies residues 202-225 (VLYTVYSTGGAFYLPTLLLIALYG). Topologically, residues 226–311 (RIYVEARSRI…AARERKATKT (86 aa)) are cytoplasmic. Over residues 255-268 (DSPGSTTSVTSINS) the composition is skewed to polar residues. The segment at 255-278 (DSPGSTTSVTSINSRAPDLPSESG) is disordered. Residues 312–333 (LGIILGAFIVCWLPFFIISLVM) traverse the membrane as a helical segment. The Extracellular segment spans residues 334–343 (PICKDACWFH). A helical transmembrane segment spans residues 344–366 (MATLDFFNWLGYLNSLINPIIYT). The NPxxY motif; important for ligand-induced conformation changes and signaling signature appears at 361 to 365 (NPIIY). At 367 to 386 (MSNEDFKQAFHKLIRFKCAG) the chain is on the cytoplasmic side. The S-palmitoyl cysteine moiety is linked to residue cysteine 384.

It belongs to the G-protein coupled receptor 1 family. In terms of assembly, homodimer. Heterodimer with HTR1D. In terms of processing, phosphorylated. Desensitization of the receptor may be mediated by its phosphorylation. Palmitoylated.

The protein resides in the cell membrane. G-protein coupled receptor for 5-hydroxytryptamine (serotonin). Also functions as a receptor for ergot alkaloid derivatives, various anxiolytic and antidepressant drugs and other psychoactive substances, such as lysergic acid diethylamide (LSD). Ligand binding causes a conformation change that triggers signaling via guanine nucleotide-binding proteins (G proteins) and modulates the activity of downstream effectors, such as adenylate cyclase. HTR1B is coupled to G(i)/G(o) G alpha proteins and mediates inhibitory neurotransmission by inhibiting adenylate cyclase activity. Arrestin family members inhibit signaling via G proteins and mediate activation of alternative signaling pathways. Regulates the release of 5-hydroxytryptamine, dopamine and acetylcholine in the brain, and thereby affects neural activity, nociceptive processing, pain perception, mood and behavior. Besides, plays a role in vasoconstriction of cerebral arteries. The chain is 5-hydroxytryptamine receptor 1B (HTR1B) from Cricetulus griseus (Chinese hamster).